Here is a 423-residue protein sequence, read N- to C-terminus: Serine--tRNA ligase (423 aa).

231–233 provides a ligand contact to L-serine; it reads TAE. 262 to 264 serves as a coordination point for ATP; it reads RSE. Glu-285 is an L-serine binding site. 349–352 contacts ATP; that stretch reads EISS. Residue Ser-384 coordinates L-serine.

The protein belongs to the class-II aminoacyl-tRNA synthetase family. Type-1 seryl-tRNA synthetase subfamily. As to quaternary structure, homodimer. The tRNA molecule binds across the dimer.

It localises to the cytoplasm. It carries out the reaction tRNA(Ser) + L-serine + ATP = L-seryl-tRNA(Ser) + AMP + diphosphate + H(+). The catalysed reaction is tRNA(Sec) + L-serine + ATP = L-seryl-tRNA(Sec) + AMP + diphosphate + H(+). Its pathway is aminoacyl-tRNA biosynthesis; selenocysteinyl-tRNA(Sec) biosynthesis; L-seryl-tRNA(Sec) from L-serine and tRNA(Sec): step 1/1. Functionally, catalyzes the attachment of serine to tRNA(Ser). Is also able to aminoacylate tRNA(Sec) with serine, to form the misacylated tRNA L-seryl-tRNA(Sec), which will be further converted into selenocysteinyl-tRNA(Sec). This chain is Serine--tRNA ligase, found in Lactococcus lactis subsp. cremoris (strain MG1363).